Reading from the N-terminus, the 250-residue chain is uncharacterized protein (250 aa).

The stretch at 165-208 (HLNLETANTKATEYQKNYQEELKQRQELRQKLLQERTQKMLEAL) forms a coiled coil. The segment covering 201–233 (TQKMLEALHQEETPEQDARDTAKKKTDQEEHTM) has biased composition (basic and acidic residues). Residues 201–250 (TQKMLEALHQEETPEQDARDTAKKKTDQEEHTMRKANAPKTKASGEAPTP) are disordered.

This is an uncharacterized protein from Treponema pallidum (strain Nichols).